A 218-amino-acid polypeptide reads, in one-letter code: MPLPDTMFCAQQIHIPPELPDILKQFTKAAIRTQPADVLQWSAGYFSALSRGDPLPVKDRIEMPVATQKTDTGLTQGLLKVLHKQCSHKQYVELADLEKKWKNLCLPVEKLRTILELDPCEDKIEWIKFLALGCSSLGRTLNTAMKNVCEILTSDPEGGPARIPFETFAYVYQYLSGLDPELPAVETENYLTSLRLMSESRKNGMIGLSDFFVGKKII.

The region spanning 17–54 is the RIIa domain; sequence PELPDILKQFTKAAIRTQPADVLQWSAGYFSALSRGDP.

It belongs to the ropporin family. As to quaternary structure, component of the axonemal radial spoke complex 1 (RS1), at least composed of spoke head proteins RSPH1, RSPH3, RSPH9 and the cilia-specific component RSPH4A or sperm-specific component RSPH6A, spoke stalk proteins RSPH14, DNAJB13, DYDC1, ROPN1L and NME5, and the anchor protein IQUB. May interact with AKAP3. Interacts with FSCB; the interaction increases upon spermatozoa capacitation conditions. Interacts with CFAP61. In terms of processing, sumoylated, sumoylation decreases upon spermatozoa capacitation conditions. In terms of tissue distribution, testis-specific. Expression is restricted to germ cells.

The protein resides in the cell projection. It localises to the cilium. Its subcellular location is the flagellum. Functions as part of axonemal radial spoke complexes that play an important part in the motility of sperm and cilia. Important for male fertility. With ROPN1, involved in fibrous sheath integrity and sperm motility, plays a role in PKA-dependent signaling processes required for spermatozoa capacitation. This chain is Ropporin-1-like protein (Ropn1l), found in Mus musculus (Mouse).